The following is a 246-amino-acid chain: CD99 antigen-like protein 2 (246 aa).

Positions 1–25 (MVARLTTLLVCLVFSLATLVQRGYG) are cleaved as a signal peptide. At 26 to 160 (DFDDFNLEDA…PGSGAVTDPG (135 aa)) the chain is on the extracellular side. Positions 43-156 (KQSHFSTTTR…SQDDPGSGAV (114 aa)) are disordered. Composition is skewed to low complexity over residues 49–58 (TTTRRTGTTR) and 71–81 (TTTTTKRPGTT). A compositionally biased stretch (basic and acidic residues) spans 100 to 109 (DDRNDLDGPK). The O-linked (Xyl...) (chondroitin sulfate) serine glycan is linked to serine 153. Residues 161 to 181 (TIAGLVSALAAALLGAVSGYL) form a helical membrane-spanning segment. The Cytoplasmic portion of the chain corresponds to 182–246 (SYQHRKFCFS…EPLAPERPRI (65 aa)). The tract at residues 223-246 (APPVTDSTQHSQPTEPLAPERPRI) is disordered. Over residues 227 to 236 (TDSTQHSQPT) the composition is skewed to polar residues.

This sequence belongs to the CD99 family. Post-translationally, O-glycosylated. As to expression, expressed predominantly in the ventral medullary surface of the brain, moderate expression in the cerebral cortex and cerebellum. Low expression in lung and kidney. No expression in heart, stomach, intestine and skeletal muscle.

It localises to the cell membrane. It is found in the cell junction. The protein resides in the secreted. Plays a role in a late step of leukocyte extravasation helping cells to overcome the endothelial basement membrane. Acts at the same site as, but independently of, PECAM1. Homophilic adhesion molecule, but these interactions may not be required for cell aggregation. In Rattus norvegicus (Rat), this protein is CD99 antigen-like protein 2 (Cd99l2).